The sequence spans 143 residues: Large ribosomal subunit protein uL11 (143 aa).

Belongs to the universal ribosomal protein uL11 family. In terms of assembly, part of the ribosomal stalk of the 50S ribosomal subunit. Interacts with L10 and the large rRNA to form the base of the stalk. L10 forms an elongated spine to which L12 dimers bind in a sequential fashion forming a multimeric L10(L12)X complex. Post-translationally, one or more lysine residues are methylated.

In terms of biological role, forms part of the ribosomal stalk which helps the ribosome interact with GTP-bound translation factors. The polypeptide is Large ribosomal subunit protein uL11 (Pseudomonas entomophila (strain L48)).